Consider the following 145-residue polypeptide: Group IID secretory phospholipase A2 (145 aa).

Residues 1–20 form the signal peptide; that stretch reads MELALLCGLVVMAGVIPIQG. Cystine bridges form between Cys-46–Cys-138, Cys-48–Cys-64, Cys-63–Cys-118, Cys-69–Cys-145, Cys-70–Cys-111, Cys-79–Cys-104, and Cys-97–Cys-109. Residues His-47, Gly-49, and Gly-51 each coordinate Ca(2+). Residue His-67 is part of the active site. Asp-68 contributes to the Ca(2+) binding site. An N-linked (GlcNAc...) asparagine glycan is attached at Asn-89. Asp-112 is a catalytic residue.

The protein belongs to the phospholipase A2 family. The cofactor is Ca(2+). As to expression, highly expressed in pancreas and spleen and less abundantly in colon, thymus, placenta, small intestine, and prostate.

It localises to the secreted. It catalyses the reaction a 1,2-diacyl-sn-glycero-3-phosphoethanolamine + H2O = a 1-acyl-sn-glycero-3-phosphoethanolamine + a fatty acid + H(+). The catalysed reaction is 1-hexadecanoyl-2-(9Z-octadecenoyl)-sn-glycero-3-phosphoethanolamine + H2O = 1-hexadecanoyl-sn-glycero-3-phosphoethanolamine + (9Z)-octadecenoate + H(+). It carries out the reaction 1-hexadecanoyl-2-(9Z,12Z-octadecadienoyl)-sn-glycero-3-phosphoethanolamine + H2O = 1-hexadecanoyl-sn-glycero-3-phosphoethanolamine + (9Z,12Z)-octadecadienoate + H(+). The enzyme catalyses 1,2-dihexadecanoyl-sn-glycero-3-phospho-(1'-sn-glycerol) + H2O = 1-hexadecanoyl-sn-glycero-3-phospho-(1'-sn-glycerol) + hexadecanoate + H(+). It catalyses the reaction 1-hexadecanoyl-2-(9Z-octadecenoyl)-sn-glycero-3-phospho-(1'-sn-glycerol) + H2O = 1-hexadecanoyl-sn-glycero-3-phospho-(1'-sn-glycerol) + (9Z)-octadecenoate + H(+). The catalysed reaction is a 1,2-diacyl-sn-glycero-3-phosphocholine + H2O = a 1-acyl-sn-glycero-3-phosphocholine + a fatty acid + H(+). It carries out the reaction 1,2-dihexadecanoyl-sn-glycero-3-phosphocholine + H2O = 1-hexadecanoyl-sn-glycero-3-phosphocholine + hexadecanoate + H(+). The enzyme catalyses 1-hexadecanoyl-2-(9Z-octadecenoyl)-sn-glycero-3-phosphocholine + H2O = 1-hexadecanoyl-sn-glycero-3-phosphocholine + (9Z)-octadecenoate + H(+). It catalyses the reaction 1-hexadecanoyl-2-(9Z,12Z-octadecadienoyl)-sn-glycero-3-phosphocholine + H2O = (9Z,12Z)-octadecadienoate + 1-hexadecanoyl-sn-glycero-3-phosphocholine + H(+). The catalysed reaction is 1-hexadecanoyl-2-(4Z,7Z,10Z,13Z,16Z,19Z-docosahexaenoyl)-sn-glycero-3-phosphocholine + H2O = (4Z,7Z,10Z,13Z,16Z,19Z)-docosahexaenoate + 1-hexadecanoyl-sn-glycero-3-phosphocholine + H(+). Functionally, secretory calcium-dependent phospholipase A2 that primarily targets extracellular lipids, exerting anti-inflammatory and immunosuppressive functions. Hydrolyzes the ester bond of the fatty acyl group attached at sn-2 position of phospholipids (phospholipase A2 activity) with preference for phosphatidylethanolamines and phosphatidylglycerols over phosphatidylcholines. In draining lymph nodes, selectively hydrolyzes diacyl and alkenyl forms of phosphatidylethanolamines, releasing omega-3 polyunsaturated fatty acids (PUFAs) such as eicosapentaenoate and docosahexaenoate that are precursors of the anti-inflammatory lipid mediators, resolvins. During the resolution phase of acute inflammation drives docosahexaenoate-derived resolvin D1 synthesis, which suppresses dendritic cell activation and T-helper 1 immune response. May act in an autocrine and paracrine manner. Via a mechanism independent of its catalytic activity, promotes differentiation of regulatory T cells (Tregs) and participates in the maintenance of immune tolerance. May contribute to lipid remodeling of cellular membranes and generation of lipid mediators involved in pathogen clearance. Displays bactericidal activity against Gram-positive bacteria by directly hydrolyzing phospholipids of the bacterial membrane. This is Group IID secretory phospholipase A2 (PLA2G2D) from Homo sapiens (Human).